The sequence spans 128 residues: Probable 4-amino-4-deoxy-L-arabinose-phosphoundecaprenol flippase subunit ArnF (128 aa).

The Cytoplasmic portion of the chain corresponds to 1 to 5; sequence MKGYG. The helical transmembrane segment at 6–26 threads the bilayer; it reads WGIGSVVLVTVAQLILKWGMM. The Periplasmic portion of the chain corresponds to 27-47; sequence NTPLMSLADINGQFVFNHLPQ. The chain crosses the membrane as a helical span at residues 48 to 68; the sequence is FIAVICGLAGYALSMLCWFFA. The Cytoplasmic segment spans residues 69 to 77; sequence LRYLPLNRA. Residues 78–98 form a helical membrane-spanning segment; it reads YPLLSLSYALVYLGAVSLPWF. At 99-101 the chain is on the periplasmic side; sequence SES. The helical transmembrane segment at 102-122 threads the bilayer; that stretch reads ATLLKTLGAGFILLGIWLINT. At 123-128 the chain is on the cytoplasmic side; the sequence is KPIAKD.

Belongs to the ArnF family. As to quaternary structure, heterodimer of ArnE and ArnF.

It is found in the cell inner membrane. The protein operates within bacterial outer membrane biogenesis; lipopolysaccharide biosynthesis. Translocates 4-amino-4-deoxy-L-arabinose-phosphoundecaprenol (alpha-L-Ara4N-phosphoundecaprenol) from the cytoplasmic to the periplasmic side of the inner membrane. The sequence is that of Probable 4-amino-4-deoxy-L-arabinose-phosphoundecaprenol flippase subunit ArnF from Yersinia enterocolitica serotype O:8 / biotype 1B (strain NCTC 13174 / 8081).